The following is a 43-amino-acid chain: MESATVLSITFAVILIAITGLAVYTSFGPPSAELGDPFDDHED.

A helical transmembrane segment spans residues 4-24 (ATVLSITFAVILIAITGLAVY).

Belongs to the PsbN family.

The protein resides in the cellular thylakoid membrane. May play a role in photosystem I and II biogenesis. This is Protein PsbN from Synechocystis sp. (strain ATCC 27184 / PCC 6803 / Kazusa).